The following is a 475-amino-acid chain: Glutamate--tRNA ligase (475 aa).

Positions proline 9–glycine 19 match the 'HIGH' region motif. The short motif at lysine 240–arginine 244 is the 'KMSKS' region element. Lysine 243 is a binding site for ATP.

It belongs to the class-I aminoacyl-tRNA synthetase family. Glutamate--tRNA ligase type 1 subfamily. Monomer.

It localises to the cytoplasm. It catalyses the reaction tRNA(Glu) + L-glutamate + ATP = L-glutamyl-tRNA(Glu) + AMP + diphosphate. Functionally, catalyzes the attachment of glutamate to tRNA(Glu) in a two-step reaction: glutamate is first activated by ATP to form Glu-AMP and then transferred to the acceptor end of tRNA(Glu). The polypeptide is Glutamate--tRNA ligase (Vibrio campbellii (strain ATCC BAA-1116)).